The sequence spans 278 residues: Methyltransferase adrK (278 aa).

S-adenosyl-L-methionine is bound by residues 124-125 (DL), 151-152 (DV), and 152-153 (VL).

The protein belongs to the class I-like SAM-binding methyltransferase superfamily. As to quaternary structure, homodimer.

Its pathway is secondary metabolite biosynthesis; terpenoid biosynthesis. Its function is as follows. Methyltransferase; part of the gene cluster that mediates the biosynthesis of andrastins, meroterpenoid compounds that exhibit inhibitory activity against ras farnesyltransferase, suggesting that they could be promising leads for antitumor agents. The first step of the pathway is the synthesis of 3,5-dimethylorsellinic acid (DMOA) by the polyketide synthase adrD via condensation of one acetyl-CoA starter unit with 3 malonyl-CoA units and 2 methylations. DMAO is then converted to farnesyl-DMAO by the prenyltransferase adrG. The methyltransferase adrK catalyzes the methylation of the carboxyl group of farnesyl-DMAO to farnesyl-DMAO methyl ester which is further converted to epoxyfarnesyl-DMAO methyl ester by the FAD-dependent monooxygenase adrH. The terpene cyclase adrI then catalyzes the carbon skeletal rearrangement to generate the andrastin E, the first compound in the pathway having the andrastin scaffold, with the tetracyclic ring system. The post-cyclization tailoring enzymes adrF, adrE, adrJ, and adrA, are involved in the conversion of andrastin E into andrastin A. The short chain dehydrogenase adrF is responsible for the oxidation of the C-3 a hydroxyl group of andrastin E to yield the corresponding ketone, andrastin D. The ketoreductase adrE stereoselectively reduces the carbonyl moiety to reverse the stereochemistry of the C-3 position to yield andrastin F. The acetyltransferase adrJ is the acetyltransferase that attaches the acetyl group to the C-3 hydroxyl group of andrastin F to yield andrastin C. Finally, the cytochrome P450 monooxygenase adrA catalyzes two sequential oxidation reactions of the C-23 methyl group, to generate the corresponding alcohol andrastin B, and aldehyde andrastin A. In Penicillium roqueforti, this protein is Methyltransferase adrK.